Reading from the N-terminus, the 213-residue chain is Virion protein US10 homolog (213 aa).

It belongs to the herpesviridae US10 family. In terms of processing, phosphorylated.

The protein resides in the virion tegument. It localises to the host nucleus matrix. The polypeptide is Virion protein US10 homolog (US639) (Gallid herpesvirus 2 (strain GA) (GaHV-2)).